The primary structure comprises 303 residues: Deoxyhypusine hydroxylase (303 aa).

2 HEAT-like PBS-type repeats span residues 56-82 (LKHELAYCLGQMKDRRALPVLKQVLQD) and 89-115 (VRHEAGEALGAIGDPEVLELLREYAQD). Fe cation contacts are provided by histidine 58, histidine 91, and glutamate 92. A disordered region spans residues 139-158 (DSPDTNPYLSVDPAPPAEEK). 3 HEAT-like PBS-type repeats span residues 176–202 (HRYRAMFALRNIGGEEAVLALADGLQI), 207–233 (FRHEIGYVLGQMQHKAAVPGLSAALER), and 240–266 (VRHECAEALGSIAHEDCLKALRAHVGD). Fe cation contacts are provided by histidine 209, histidine 242, and glutamate 243.

Belongs to the deoxyhypusine hydroxylase family. Fe(2+) serves as cofactor.

The enzyme catalyses [eIF5A protein]-deoxyhypusine + AH2 + O2 = [eIF5A protein]-hypusine + A + H2O. It participates in protein modification; eIF5A hypusination. Catalyzes the hydroxylation of the N(6)-(4-aminobutyl)-L-lysine intermediate produced by deoxyhypusine synthase/DHPS on a critical lysine of the eukaryotic translation initiation factor 5A/eIF-5A. This is the second step of the post-translational modification of that lysine into an unusual amino acid residue named hypusine. Hypusination is unique to mature eIF-5A factor and is essential for its function. The chain is Deoxyhypusine hydroxylase (dohh) from Xenopus laevis (African clawed frog).